Here is an 87-residue protein sequence, read N- to C-terminus: Small ribosomal subunit protein bS20 (87 aa).

The interval 1 to 22 is disordered; the sequence is MANIKSQIKRIGTNKKAQERNK.

The protein belongs to the bacterial ribosomal protein bS20 family.

Its function is as follows. Binds directly to 16S ribosomal RNA. The chain is Small ribosomal subunit protein bS20 from Clavibacter michiganensis subsp. michiganensis (strain NCPPB 382).